The sequence spans 1034 residues: Condensin complex subunit 3 (1034 aa).

7 HEAT repeats span residues 95-132 (SPVN…NLPE), 139-176 (DLFD…PSDP), 178-213 (CPVS…SLPK), 242-279 (LTIA…QYSE), 281-317 (DVLD…LVQN), 439-476 (TSLI…PIVT), and 618-655 (DFAR…LFGM). Residues 663-672 (TNPDDSQCKA) show a composition bias toward polar residues. Positions 663–693 (TNPDDSQCKAQENADEDISEQEKPGSVDENL) are disordered. HEAT repeat units lie at residues 703–740 (ATVN…SGRL), 785–823 (CFAE…DLTR), and 878–915 (ENST…SGRE). Positions 909-949 (QLRSGREEHRVSKETEPQVSKETEDRTNLQENEEGKQKDEA) are enriched in basic and acidic residues. The tract at residues 909-1034 (QLRSGREEHR…LSKLLNEEAN (126 aa)) is disordered. Positions 964-984 (RGKATKGRRKGPAAAATRRKA) are enriched in basic residues. The segment covering 985–999 (SKAEEAEAEMERQEE) has biased composition (basic and acidic residues).

Belongs to the CND3 (condensin subunit 3) family. In terms of assembly, component of the condensin complex, which contains the XCAP-E/SMC2 and XCAP-C/SMC4 heterodimer, and three non SMC subunits that probably regulate the complex: XCAP-H/NCAPH, XCAP-D2/NCAPD2 and XCAP-G/NCAPG. Phosphorylated by cdk1. Its phosphorylation, as well as that of XCAP-D2 and XCAP-H subunits, activates the condensin complex and is required for chromosome condensation.

Its subcellular location is the nucleus. The protein resides in the cytoplasm. It localises to the chromosome. Its function is as follows. Regulatory subunit of the condensin complex, a complex required for conversion of interphase chromatin into mitotic-like condense chromosomes. The condensin complex probably introduces positive supercoils into relaxed DNA in the presence of type I topoisomerases and converts nicked DNA into positive knotted forms in the presence of type II topoisomerase. The protein is Condensin complex subunit 3 (ncapg) of Xenopus laevis (African clawed frog).